The following is a 508-amino-acid chain: UDP-N-acetylmuramoylalanine--D-glutamate ligase (508 aa).

138–144 (GTNGKTT) is a binding site for ATP. A disordered region spans residues 294–314 (FDEPAPRRKKDAPPPTRAGGR).

Belongs to the MurCDEF family.

The protein localises to the cytoplasm. The enzyme catalyses UDP-N-acetyl-alpha-D-muramoyl-L-alanine + D-glutamate + ATP = UDP-N-acetyl-alpha-D-muramoyl-L-alanyl-D-glutamate + ADP + phosphate + H(+). It participates in cell wall biogenesis; peptidoglycan biosynthesis. In terms of biological role, cell wall formation. Catalyzes the addition of glutamate to the nucleotide precursor UDP-N-acetylmuramoyl-L-alanine (UMA). In Bordetella parapertussis (strain 12822 / ATCC BAA-587 / NCTC 13253), this protein is UDP-N-acetylmuramoylalanine--D-glutamate ligase.